Reading from the N-terminus, the 305-residue chain is Elongation factor Ts (305 aa).

The segment at 79-82 is involved in Mg(2+) ion dislocation from EF-Tu; it reads TDFV.

It belongs to the EF-Ts family.

The protein resides in the cytoplasm. Associates with the EF-Tu.GDP complex and induces the exchange of GDP to GTP. It remains bound to the aminoacyl-tRNA.EF-Tu.GTP complex up to the GTP hydrolysis stage on the ribosome. This Brucella suis biovar 1 (strain 1330) protein is Elongation factor Ts.